Reading from the N-terminus, the 246-residue chain is Large ribosomal subunit protein uL2 (246 aa).

Residues 197–226 form a disordered region; that stretch reads SPYAHPHGGGSHPKGGTPVPKTAPPGQKVG.

It belongs to the universal ribosomal protein uL2 family. Part of the 50S ribosomal subunit. Forms a bridge to the 30S subunit in the 70S ribosome.

One of the primary rRNA binding proteins. Required for association of the 30S and 50S subunits to form the 70S ribosome, for tRNA binding and peptide bond formation. It has been suggested to have peptidyltransferase activity; this is somewhat controversial. Makes several contacts with the 16S rRNA in the 70S ribosome. The protein is Large ribosomal subunit protein uL2 of Pyrobaculum islandicum (strain DSM 4184 / JCM 9189 / GEO3).